The following is a 221-amino-acid chain: Ependymin-2 (221 aa).

The N-terminal stretch at 1-21 (MQDFAFAALSIWLCLGATALA) is a signal peptide. N-linked (GlcNAc...) asparagine glycans are attached at residues asparagine 33, asparagine 73, and asparagine 97.

This sequence belongs to the ependymin family. In terms of processing, binds calcium through the terminal sialic acids. EPDs are synthesized in the meninx and secreted in the cerebrospinal fluid.

The protein localises to the secreted. Functionally, may play a role in neural plasticity. May be involved during axon regeneration. The chain is Ependymin-2 (epd2) from Oncorhynchus mykiss (Rainbow trout).